The following is a 276-amino-acid chain: MVAMTAIQGAGIGLRSQHYAHILTHQPAIPWLEALSDNYLGGGLPLYHLEQIRAQYPITLHGVSLSLGSADPLNMDYLTQLKQLADRIEPVHVSDHLAWVSVNGHYFNDLAPLPYTESVLHYVADRISQVQEFLGRRILIENLSPYLQFRHNSLTEWQFLAALLVEADCHLLLDINNVYVNATNHGFDPLDYLDALPVDRIKEIHLAGYEEQDHFLFDTHGYPVQPGVWTLYQQALQRFGPVPTLIEWDTDIPSFDVLMAEAQQADTYLCQHRPQN.

Belongs to the UPF0276 family.

In Acaryochloris marina (strain MBIC 11017), this protein is UPF0276 protein AM1_3026.